The primary structure comprises 318 residues: Tyrosine recombinase XerD (318 aa).

Residues 5–90 (PSDAKLTGLF…AMRHLYRFLL (86 aa)) form the Core-binding (CB) domain. Residues 111 to 310 (GLPKVLSIAD…VEERLKSLVR (200 aa)) enclose the Tyr recombinase domain. Residues R161, K185, H262, R265, and H288 contribute to the active site. The active-site O-(3'-phospho-DNA)-tyrosine intermediate is Y297.

It belongs to the 'phage' integrase family. XerD subfamily. Forms a cyclic heterotetrameric complex composed of two molecules of XerC and two molecules of XerD.

It localises to the cytoplasm. Site-specific tyrosine recombinase, which acts by catalyzing the cutting and rejoining of the recombining DNA molecules. The XerC-XerD complex is essential to convert dimers of the bacterial chromosome into monomers to permit their segregation at cell division. It also contributes to the segregational stability of plasmids. This Bradyrhizobium diazoefficiens (strain JCM 10833 / BCRC 13528 / IAM 13628 / NBRC 14792 / USDA 110) protein is Tyrosine recombinase XerD.